Consider the following 164-residue polypeptide: ATP synthase subunit b (164 aa).

A helical membrane pass occupies residues 10–30; that stretch reads LLISQIVNFCLLAFLLNTFLY.

This sequence belongs to the ATPase B chain family. As to quaternary structure, F-type ATPases have 2 components, F(1) - the catalytic core - and F(0) - the membrane proton channel. F(1) has five subunits: alpha(3), beta(3), gamma(1), delta(1), epsilon(1). F(0) has three main subunits: a(1), b(2) and c(10-14). The alpha and beta chains form an alternating ring which encloses part of the gamma chain. F(1) is attached to F(0) by a central stalk formed by the gamma and epsilon chains, while a peripheral stalk is formed by the delta and b chains.

The protein localises to the cell membrane. In terms of biological role, f(1)F(0) ATP synthase produces ATP from ADP in the presence of a proton or sodium gradient. F-type ATPases consist of two structural domains, F(1) containing the extramembraneous catalytic core and F(0) containing the membrane proton channel, linked together by a central stalk and a peripheral stalk. During catalysis, ATP synthesis in the catalytic domain of F(1) is coupled via a rotary mechanism of the central stalk subunits to proton translocation. Component of the F(0) channel, it forms part of the peripheral stalk, linking F(1) to F(0). The sequence is that of ATP synthase subunit b from Herpetosiphon aurantiacus (strain ATCC 23779 / DSM 785 / 114-95).